The following is a 732-amino-acid chain: Elongation factor 2 (732 aa).

Residues 19–228 enclose the tr-type G domain; sequence ELVRNIGIVA…TKITFKDIVE (210 aa). Residues 28–35, 94–98, and 148–151 each bind GTP; these read AHIDHGKT, DTPGH, and NKID. Histidine 598 is modified (diphthamide).

The protein belongs to the TRAFAC class translation factor GTPase superfamily. Classic translation factor GTPase family. EF-G/EF-2 subfamily.

The protein resides in the cytoplasm. In terms of biological role, catalyzes the GTP-dependent ribosomal translocation step during translation elongation. During this step, the ribosome changes from the pre-translocational (PRE) to the post-translocational (POST) state as the newly formed A-site-bound peptidyl-tRNA and P-site-bound deacylated tRNA move to the P and E sites, respectively. Catalyzes the coordinated movement of the two tRNA molecules, the mRNA and conformational changes in the ribosome. The sequence is that of Elongation factor 2 from Thermoplasma volcanium (strain ATCC 51530 / DSM 4299 / JCM 9571 / NBRC 15438 / GSS1).